Consider the following 344-residue polypeptide: Heat-inducible transcription repressor HrcA (344 aa).

It belongs to the HrcA family.

Functionally, negative regulator of class I heat shock genes (grpE-dnaK-dnaJ and groELS operons). Prevents heat-shock induction of these operons. The sequence is that of Heat-inducible transcription repressor HrcA from Geobacillus kaustophilus (strain HTA426).